The sequence spans 267 residues: Putative hydro-lyase Arth_3576 (267 aa).

This sequence belongs to the D-glutamate cyclase family.

The chain is Putative hydro-lyase Arth_3576 from Arthrobacter sp. (strain FB24).